The primary structure comprises 408 residues: Cytochrome P450 55A3 (408 aa).

Cys357 is a heme binding site.

Belongs to the cytochrome P450 family. It depends on heme as a cofactor.

This is Cytochrome P450 55A3 (CYP55A3) from Fusarium lichenicola (Cylindrocarpon lichenicola).